A 502-amino-acid chain; its full sequence is Glycerol kinase (502 aa).

Residue Thr-14 coordinates ADP. Positions 14, 15, and 16 each coordinate ATP. Position 14 (Thr-14) interacts with sn-glycerol 3-phosphate. An ADP-binding site is contributed by Arg-18. Residues Arg-84, Glu-85, Tyr-136, and Asp-246 each coordinate sn-glycerol 3-phosphate. Glycerol contacts are provided by Arg-84, Glu-85, Tyr-136, Asp-246, and Gln-247. Residues Thr-268 and Gly-311 each coordinate ADP. ATP is bound by residues Thr-268, Gly-311, Gln-315, and Gly-412. The ADP site is built by Gly-412 and Asn-416.

This sequence belongs to the FGGY kinase family. Homotetramer and homodimer (in equilibrium). Heterodimer with EIIA-Glc. Binds 1 zinc ion per glycerol kinase EIIA-Glc dimer. The zinc ion is important for dimerization.

It catalyses the reaction glycerol + ATP = sn-glycerol 3-phosphate + ADP + H(+). It participates in polyol metabolism; glycerol degradation via glycerol kinase pathway; sn-glycerol 3-phosphate from glycerol: step 1/1. Its activity is regulated as follows. Activity of this regulatory enzyme is affected by several metabolites. Allosterically and non-competitively inhibited by fructose 1,6-bisphosphate (FBP) and unphosphorylated phosphocarrier protein EIIA-Glc (III-Glc), an integral component of the bacterial phosphotransferase (PTS) system. Key enzyme in the regulation of glycerol uptake and metabolism. Catalyzes the phosphorylation of glycerol to yield sn-glycerol 3-phosphate. The chain is Glycerol kinase from Escherichia coli O8 (strain IAI1).